We begin with the raw amino-acid sequence, 173 residues long: Alpha-crystallin A chain (173 aa).

N-acetylmethionine is present on Met1. The tract at residues 1 to 63 (MDIAIQHPWF…RTVLDSGISE (63 aa)) is required for complex formation with BFSP1 and BFSP2. Gln6 is subject to Deamidated glutamine; partial. A Phosphoserine modification is found at Ser45. At Gln50 the chain carries Deamidated glutamine; partial. A sHSP domain is found at 52–162 (LFRTVLDSGI…GHSERAIPVS (111 aa)). Lys70 and Lys99 each carry N6-acetyllysine. A Zn(2+)-binding site is contributed by His100. Asn101 bears the Deamidated asparagine; partial mark. Zn(2+) is bound by residues Glu102 and His107. Ser122 carries the phosphoserine modification. At Asn123 the chain carries Deamidated asparagine; partial. Residues 144-173 (PKVPSGMDAGHSERAIPVSREEKPSSAPSS) form a disordered region. Positions 153-167 (GHSERAIPVSREEKP) are enriched in basic and acidic residues. Position 154 (His154) interacts with Zn(2+). Residue Ser162 is glycosylated (O-linked (GlcNAc) serine).

The protein belongs to the small heat shock protein (HSP20) family. In terms of assembly, heteromer composed of three CRYAA and one CRYAB subunits. Inter-subunit bridging via zinc ions enhances stability, which is crucial as there is no protein turn over in the lens. Can also form homodimers and homotetramers (dimers of dimers) which serve as the building blocks of homooligomers. Within homooligomers, the zinc-binding motif is created from residues of 3 different molecules. His-100 and Glu-102 from one molecule are ligands of the zinc ion, and His-107 and His-154 residues from additional molecules complete the site with tetrahedral coordination geometry. Part of a complex required for lens intermediate filament formation composed of BFSP1, BFSP2 and CRYAA. In terms of processing, acetylation at Lys-70 may increase chaperone activity. Post-translationally, undergoes age-dependent proteolytical cleavage at the C-terminus.

It localises to the cytoplasm. The protein localises to the nucleus. Functionally, contributes to the transparency and refractive index of the lens. Acts as a chaperone, preventing aggregation of various proteins under a wide range of stress conditions. Required for the correct formation of lens intermediate filaments as part of a complex composed of BFSP1, BFSP2 and CRYAA. The chain is Alpha-crystallin A chain (CRYAA) from Melursus ursinus (Sloth bear).